The following is a 1479-amino-acid chain: Putative receptor-type tyrosine-protein phosphatase mosPTP-1 (1479 aa).

The signal sequence occupies residues 1–28 (MKPRLLTTVTTWLALVLPVVYLSRPCQA). The Extracellular portion of the chain corresponds to 29–365 (LPTVNFTANY…RQSYNDYNLA (337 aa)). Residues Asn33, Asn40, Asn146, Asn182, Asn248, Asn294, and Asn306 are each glycosylated (N-linked (GlcNAc...) asparagine). 2 consecutive Fibronectin type-III domains span residues 143-242 (KPLN…AGPS) and 243-346 (APKV…VQLN). A helical membrane pass occupies residues 366–386 (VMIGILICCFGLLFIVLTILL). The Cytoplasmic portion of the chain corresponds to 387–1479 (WKKCFHAAYY…AKLRAVVRVE (1093 aa)). 2 Tyrosine-protein phosphatase domains span residues 452–717 (FSKE…LVEA) and 740–992 (IDSQ…LSYM). The Phosphocysteine intermediate role is filled by Cys658.

It belongs to the protein-tyrosine phosphatase family. Receptor class subfamily. In terms of assembly, interacts with C-type lectin mosGCTL-1. Interacts with C-type lectin mosGCTL-7.

The protein localises to the cell membrane. It catalyses the reaction O-phospho-L-tyrosyl-[protein] + H2O = L-tyrosyl-[protein] + phosphate. In terms of biological role, putative protein tyrosine-protein phosphatase. Functionally, (Microbial infection) Facilitates West Nile virus infection in mosquitoes. This Culex quinquefasciatus (Southern house mosquito) protein is Putative receptor-type tyrosine-protein phosphatase mosPTP-1.